The chain runs to 199 residues: Acireductone dioxygenase 2 (199 aa).

4 residues coordinate Fe(2+): His98, His100, Glu104, and His143. Positions 98, 100, 104, and 143 each coordinate Ni(2+).

The protein belongs to the acireductone dioxygenase (ARD) family. Fe(2+) is required as a cofactor. Ni(2+) serves as cofactor.

It is found in the cytoplasm. It localises to the nucleus. The enzyme catalyses 1,2-dihydroxy-5-(methylsulfanyl)pent-1-en-3-one + O2 = 4-methylsulfanyl-2-oxobutanoate + formate + 2 H(+). The catalysed reaction is 1,2-dihydroxy-5-(methylsulfanyl)pent-1-en-3-one + O2 = 3-(methylsulfanyl)propanoate + CO + formate + 2 H(+). It participates in amino-acid biosynthesis; L-methionine biosynthesis via salvage pathway; L-methionine from S-methyl-5-thio-alpha-D-ribose 1-phosphate: step 5/6. Catalyzes 2 different reactions between oxygen and the acireductone 1,2-dihydroxy-3-keto-5-methylthiopentene (DHK-MTPene) depending upon the metal bound in the active site. Fe-containing acireductone dioxygenase (Fe-ARD) produces formate and 2-keto-4-methylthiobutyrate (KMTB), the alpha-ketoacid precursor of methionine in the methionine recycle pathway. Ni-containing acireductone dioxygenase (Ni-ARD) produces methylthiopropionate, carbon monoxide and formate, and does not lie on the methionine recycle pathway. The protein is Acireductone dioxygenase 2 of Vitis vinifera (Grape).